The chain runs to 858 residues: Bifunctional uridylyltransferase/uridylyl-removing enzyme (858 aa).

The uridylyltransferase stretch occupies residues 1 to 324; that stretch reads MSAHAAPSPE…PATSGITRVL (324 aa). Residues 325–681 are uridylyl-removing; it reads SPDRFVEKQG…ARPSPIGDAL (357 aa). One can recognise an HD domain in the interval 443–565; it reads VDQHILMVLR…VGNERYLTAL (123 aa). ACT domains lie at 682–761 and 790–858; these read QVLV…PEPS and ILSV…AIAV.

This sequence belongs to the GlnD family. It depends on Mg(2+) as a cofactor.

It catalyses the reaction [protein-PII]-L-tyrosine + UTP = [protein-PII]-uridylyl-L-tyrosine + diphosphate. It carries out the reaction [protein-PII]-uridylyl-L-tyrosine + H2O = [protein-PII]-L-tyrosine + UMP + H(+). Uridylyltransferase (UTase) activity is inhibited by glutamine, while glutamine activates uridylyl-removing (UR) activity. In terms of biological role, modifies, by uridylylation and deuridylylation, the PII regulatory proteins (GlnB and homologs), in response to the nitrogen status of the cell that GlnD senses through the glutamine level. Under low glutamine levels, catalyzes the conversion of the PII proteins and UTP to PII-UMP and PPi, while under higher glutamine levels, GlnD hydrolyzes PII-UMP to PII and UMP (deuridylylation). Thus, controls uridylylation state and activity of the PII proteins, and plays an important role in the regulation of nitrogen fixation and metabolism. This Burkholderia lata (strain ATCC 17760 / DSM 23089 / LMG 22485 / NCIMB 9086 / R18194 / 383) protein is Bifunctional uridylyltransferase/uridylyl-removing enzyme.